A 194-amino-acid polypeptide reads, in one-letter code: uncharacterized protein (194 aa).

The N-terminal stretch at Met1–Gly24 is a signal peptide.

This is an uncharacterized protein from Archaeoglobus fulgidus (strain ATCC 49558 / DSM 4304 / JCM 9628 / NBRC 100126 / VC-16).